A 250-amino-acid polypeptide reads, in one-letter code: UPF0758 protein tlr1707 (250 aa).

Residues 116–239 form the MPN domain; that stretch reads TIIDSPALAA…YQSLREITPL (124 aa). Positions 188, 190, and 201 each coordinate Zn(2+). Positions 188–201 match the JAMM motif motif; sequence HNHPSGNLSPSQAD.

This sequence belongs to the UPF0758 family.

The sequence is that of UPF0758 protein tlr1707 from Thermosynechococcus vestitus (strain NIES-2133 / IAM M-273 / BP-1).